We begin with the raw amino-acid sequence, 37 residues long: Large ribosomal subunit protein bL36 (37 aa).

Belongs to the bacterial ribosomal protein bL36 family.

The chain is Large ribosomal subunit protein bL36 from Solibacter usitatus (strain Ellin6076).